Consider the following 394-residue polypeptide: Protein NDRG1 (394 aa).

The residue at position 2 (serine 2) is an N-acetylserine. 3 positions are modified to phosphoserine: serine 2, serine 319, and serine 326. Residues 325-394 (RSRTASGSSV…AGPKSMEVSC (70 aa)) form a disordered region. Residues 327-339 (RTASGSSVTSLDG) are compositionally biased toward polar residues. Threonine 328 is subject to Phosphothreonine; by SGK1. Residues serine 330 and serine 332 each carry the phosphoserine; by SGK1 modification. Serine 333 is subject to Phosphoserine. Position 335 is a phosphothreonine (threonine 335). Serine 336 carries the phosphoserine modification. Tandem repeats lie at residues 339 to 348 (GTRSRSHTSE), 349 to 358 (GTRSRSHTSE), and 359 to 368 (GTRSRSHTSE). The tract at residues 339-368 (GTRSRSHTSEGTRSRSHTSEGTRSRSHTSE) is 3 X 10 AA tandem repeats of G-[PST]-R-S-R-S-H-T-S-E. Threonine 340 bears the Phosphothreonine mark. Phosphoserine is present on serine 342. Positions 345-371 (HTSEGTRSRSHTSEGTRSRSHTSEGAH) are enriched in basic and acidic residues. The residue at position 346 (threonine 346) is a Phosphothreonine; by SGK1. Serine 352 carries the phosphoserine modification. Threonine 356 carries the phosphothreonine; by SGK1 modification. A phosphoserine mark is found at serine 362 and serine 364. Phosphothreonine is present on residues threonine 366 and threonine 375.

Belongs to the NDRG family. Interacts with RAB4A (membrane-bound form); the interaction involves NDRG1 in vesicular recycling ofCDH1. Interacts with APOA1, APOA2, PRA1 and RTN1. Post-translationally, under stress conditions, phosphorylated in the C-terminal on many serine and threonine residues. Phosphorylated in vitro by PKA. Phosphorylation enhanced by increased intracellular cAMP levels. Homocysteine induces dephosphorylation. Phosphorylation by SGK1 is cell cycle dependent.

The protein resides in the cytoplasm. Its subcellular location is the cytosol. It is found in the cytoskeleton. The protein localises to the microtubule organizing center. It localises to the centrosome. The protein resides in the nucleus. Its subcellular location is the cell membrane. Its function is as follows. Stress-responsive protein involved in hormone responses, cell growth, and differentiation. Acts as a tumor suppressor in many cell types. Necessary but not sufficient for p53/TP53-mediated caspase activation and apoptosis. Has a role in cell trafficking notably of the Schwann cell and is necessary for the maintenance and development of the peripheral nerve myelin sheath. Required for vesicular recycling of CDH1 and TF. May also function in lipid trafficking. Protects cells from spindle disruption damage. Functions in p53/TP53-dependent mitotic spindle checkpoint. Regulates microtubule dynamics and maintains euploidy. This Macaca fascicularis (Crab-eating macaque) protein is Protein NDRG1 (Ndrg1).